The following is a 317-amino-acid chain: Probable methyltransferase tdiE (317 aa).

This sequence belongs to the methyltransferase superfamily. LaeA methyltransferase family.

It functions in the pathway secondary metabolite biosynthesis. Probable methyltransferase; part of the gene cluster that mediates the biosynthesis of terrequinone A, an antitumor agent. The first step in the biosynthetic pathway for terrequinone A is formation of indole pyruvic acid (IPA) from L-tryptophan by the aminotransferase tdiD. The nonribosomal peptide synthase tdiA then immediately converts unstable IPA to didemethylasterriquinone D (DDAQ D), via condensation of 2 IPA molecules. The symmetric connectivity of the 2 IPA molecules is thought to arise by head-to-tail dual Claisen condensations facilitated by the TE domain. TdiB then catalyzes reverse prenylation by transferring dimethylallyl diphosphate to carbon atom 2' of DDAQ D, to yield asterriquinone C-1. Finally, tdiC and tdiE enzymes robustly convert asterriquinone C-1 to terrequinone A via a transformation involving regular prenylation at carbon atom 5, which requires elimination of the hydroxy group on C-5. The protein is Probable methyltransferase tdiE of Emericella nidulans (strain FGSC A4 / ATCC 38163 / CBS 112.46 / NRRL 194 / M139) (Aspergillus nidulans).